We begin with the raw amino-acid sequence, 292 residues long: 4-hydroxy-tetrahydrodipicolinate synthase (292 aa).

Position 45 (Thr-45) interacts with pyruvate. Tyr-133 (proton donor/acceptor) is an active-site residue. Lys-161 acts as the Schiff-base intermediate with substrate in catalysis. Ile-203 is a binding site for pyruvate.

It belongs to the DapA family. Homotetramer; dimer of dimers.

Its subcellular location is the cytoplasm. The catalysed reaction is L-aspartate 4-semialdehyde + pyruvate = (2S,4S)-4-hydroxy-2,3,4,5-tetrahydrodipicolinate + H2O + H(+). It functions in the pathway amino-acid biosynthesis; L-lysine biosynthesis via DAP pathway; (S)-tetrahydrodipicolinate from L-aspartate: step 3/4. Functionally, catalyzes the condensation of (S)-aspartate-beta-semialdehyde [(S)-ASA] and pyruvate to 4-hydroxy-tetrahydrodipicolinate (HTPA). This chain is 4-hydroxy-tetrahydrodipicolinate synthase, found in Dechloromonas aromatica (strain RCB).